Here is a 514-residue protein sequence, read N- to C-terminus: Activin receptor type-2A (514 aa).

The signal sequence occupies residues 1 to 20; it reads MGAATKLAFAVFLISCSSAG. The Extracellular segment spans residues 21 to 136; it reads SILGRSETKE…TSNPVTTKPP (116 aa). 5 cysteine pairs are disulfide-bonded: Cys31-Cys61, Cys51-Cys79, Cys86-Cys105, Cys92-Cys104, and Cys106-Cys111. N-linked (GlcNAc...) asparagine glycans are attached at residues Asn46, Asn67, and Asn88. A helical transmembrane segment spans residues 137–162; the sequence is LFNTLLYSLVPIMVVAVIVLFSFWMY. Residues 163 to 514 are Cytoplasmic-facing; that stretch reads RHHKLAYPPV…VDFPPKESSL (352 aa). The 294-residue stretch at 193-486 folds into the Protein kinase domain; the sequence is LQLLEVKARG…EERIIQMQKL (294 aa). Residues 199-207 and Lys220 contribute to the ATP site; that span reads KARGRFGCV. Asp323 (proton acceptor) is an active-site residue.

It belongs to the protein kinase superfamily. TKL Ser/Thr protein kinase family. TGFB receptor subfamily.

Its subcellular location is the cell membrane. The enzyme catalyses L-threonyl-[receptor-protein] + ATP = O-phospho-L-threonyl-[receptor-protein] + ADP + H(+). It carries out the reaction L-seryl-[receptor-protein] + ATP = O-phospho-L-seryl-[receptor-protein] + ADP + H(+). Receptor for activin A, activin B and inhibin A. Involved in transmembrane signaling. The protein is Activin receptor type-2A (acvr2a) of Xenopus laevis (African clawed frog).